A 193-amino-acid chain; its full sequence is MNYEIFKAIHGLSHHNSVLDSIMVFITEYAIVAYALILLAIWLFGNTQSRKHVLYAGITGIAGLVINYLITLVYFEPRPFVAHTVHTLIPHAADASFPSDHTTGALAISIAMLFRNRKIGWPLVIFGLLTGFSRIWVGHHYPVDVLGSLVVAIIIGFLFFRFSDLLRPFVDLVVRIYEAIINKLTKKPTDQNF.

The next 4 membrane-spanning stretches (helical) occupy residues 24-44 (VFITEYAIVAYALILLAIWLF), 53-73 (VLYAGITGIAGLVINYLITLV), 119-139 (IGWPLVIFGLLTGFSRIWVGH), and 140-160 (HYPVDVLGSLVVAIIIGFLFF).

It belongs to the BcrC/YbjG family.

It localises to the cell membrane. The enzyme catalyses di-trans,octa-cis-undecaprenyl diphosphate + H2O = di-trans,octa-cis-undecaprenyl phosphate + phosphate + H(+). Catalyzes the dephosphorylation of undecaprenyl diphosphate (UPP). Confers resistance to bacitracin. In Bacillus subtilis (strain 168), this protein is Undecaprenyl-diphosphatase BcrC (bcrC).